We begin with the raw amino-acid sequence, 691 residues long: Elongation factor G (691 aa).

The 276-residue stretch at 8–283 folds into the tr-type G domain; it reads EDYRNFGIMA…AVVDYLPSPA (276 aa). GTP is bound by residues 17-24, 81-85, and 135-138; these read AHIDAGKT, DTPGH, and NKMD.

The protein belongs to the TRAFAC class translation factor GTPase superfamily. Classic translation factor GTPase family. EF-G/EF-2 subfamily.

The protein resides in the cytoplasm. Functionally, catalyzes the GTP-dependent ribosomal translocation step during translation elongation. During this step, the ribosome changes from the pre-translocational (PRE) to the post-translocational (POST) state as the newly formed A-site-bound peptidyl-tRNA and P-site-bound deacylated tRNA move to the P and E sites, respectively. Catalyzes the coordinated movement of the two tRNA molecules, the mRNA and conformational changes in the ribosome. The sequence is that of Elongation factor G from Methylobacterium sp. (strain 4-46).